We begin with the raw amino-acid sequence, 288 residues long: Oxaloacetate decarboxylase (288 aa).

Substrate is bound at residue S47. Residue D85 coordinates Mg(2+). Positions 156 and 232 each coordinate substrate.

This sequence belongs to the isocitrate lyase/PEP mutase superfamily. Oxaloacetate decarboxylase family. Homotetramer; dimer of dimers. Requires Mg(2+) as cofactor.

It catalyses the reaction oxaloacetate + H(+) = pyruvate + CO2. Its function is as follows. Catalyzes the decarboxylation of oxaloacetate into pyruvate. Seems to play a role in maintaining cellular concentrations of bicarbonate and pyruvate. This chain is Oxaloacetate decarboxylase, found in Bradyrhizobium sp. (strain BTAi1 / ATCC BAA-1182).